We begin with the raw amino-acid sequence, 320 residues long: Ribose-phosphate pyrophosphokinase (320 aa).

ATP contacts are provided by residues 43 to 45 (DGE) and 102 to 103 (RQ). The Mg(2+) site is built by H136 and D178. Residue K201 is part of the active site. D-ribose 5-phosphate contacts are provided by residues R203, D227, and 231–235 (DTAGT).

Belongs to the ribose-phosphate pyrophosphokinase family. Class I subfamily. As to quaternary structure, homohexamer. Mg(2+) is required as a cofactor.

The protein localises to the cytoplasm. The catalysed reaction is D-ribose 5-phosphate + ATP = 5-phospho-alpha-D-ribose 1-diphosphate + AMP + H(+). The protein operates within metabolic intermediate biosynthesis; 5-phospho-alpha-D-ribose 1-diphosphate biosynthesis; 5-phospho-alpha-D-ribose 1-diphosphate from D-ribose 5-phosphate (route I): step 1/1. In terms of biological role, involved in the biosynthesis of the central metabolite phospho-alpha-D-ribosyl-1-pyrophosphate (PRPP) via the transfer of pyrophosphoryl group from ATP to 1-hydroxyl of ribose-5-phosphate (Rib-5-P). The protein is Ribose-phosphate pyrophosphokinase of Clostridium tetani (strain Massachusetts / E88).